The chain runs to 81 residues: Beta-defensin 34 (81 aa).

Residues 1–20 (MKTFLFLFAVLFFWSQPRMH) form the signal peptide. Intrachain disulfides connect C28–C55, C35–C49, and C39–C56. The span at 62 to 72 (CGRSKGNQSDE) shows a compositional bias: polar residues. The segment at 62–81 (CGRSKGNQSDEGSGHMGTRG) is disordered.

This sequence belongs to the beta-defensin family. Only expressed in epididymis (caput, corpus and cauda).

It localises to the secreted. Functionally, has antibacterial activity. This Mus musculus (Mouse) protein is Beta-defensin 34 (Defb34).